We begin with the raw amino-acid sequence, 119 residues long: Ribonuclease P protein component (119 aa).

This sequence belongs to the RnpA family. Consists of a catalytic RNA component (M1 or rnpB) and a protein subunit.

It catalyses the reaction Endonucleolytic cleavage of RNA, removing 5'-extranucleotides from tRNA precursor.. RNaseP catalyzes the removal of the 5'-leader sequence from pre-tRNA to produce the mature 5'-terminus. It can also cleave other RNA substrates such as 4.5S RNA. The protein component plays an auxiliary but essential role in vivo by binding to the 5'-leader sequence and broadening the substrate specificity of the ribozyme. In Listeria monocytogenes serotype 4a (strain HCC23), this protein is Ribonuclease P protein component.